A 119-amino-acid polypeptide reads, in one-letter code: Large ribosomal subunit protein bL20 (119 aa).

The protein belongs to the bacterial ribosomal protein bL20 family.

In terms of biological role, binds directly to 23S ribosomal RNA and is necessary for the in vitro assembly process of the 50S ribosomal subunit. It is not involved in the protein synthesizing functions of that subunit. In Bacillus pumilus (strain SAFR-032), this protein is Large ribosomal subunit protein bL20.